Reading from the N-terminus, the 132-residue chain is L-ectoine synthase (132 aa).

It belongs to the ectoine synthase family.

The enzyme catalyses (2S)-4-acetamido-2-aminobutanoate = L-ectoine + H2O. It participates in amine and polyamine biosynthesis; ectoine biosynthesis; L-ectoine from L-aspartate 4-semialdehyde: step 3/3. In terms of biological role, catalyzes the circularization of gamma-N-acetyl-alpha,gamma-diaminobutyric acid (ADABA) to ectoine (1,4,5,6-tetrahydro-2-methyl-4-pyrimidine carboxylic acid), which is an excellent osmoprotectant. This is L-ectoine synthase from Alkalilimnicola ehrlichii (strain ATCC BAA-1101 / DSM 17681 / MLHE-1).